A 146-amino-acid chain; its full sequence is ATP synthase epsilon chain (146 aa).

The span at 92-116 (ISVDQARRDRDSLRKKLNEHERSEQ) shows a compositional bias: basic and acidic residues. Residues 92–120 (ISVDQARRDRDSLRKKLNEHERSEQDPEV) are disordered.

This sequence belongs to the ATPase epsilon chain family. As to quaternary structure, F-type ATPases have 2 components, CF(1) - the catalytic core - and CF(0) - the membrane proton channel. CF(1) has five subunits: alpha(3), beta(3), gamma(1), delta(1), epsilon(1). CF(0) has three main subunits: a, b and c.

Its subcellular location is the cell membrane. Produces ATP from ADP in the presence of a proton gradient across the membrane. In Cutibacterium acnes (strain DSM 16379 / KPA171202) (Propionibacterium acnes), this protein is ATP synthase epsilon chain.